Consider the following 339-residue polypeptide: Dihydroorotate dehydrogenase (quinone) (339 aa).

FMN is bound by residues 61–65 (AGLDK) and Thr85. Lys65 contributes to the substrate binding site. A substrate-binding site is contributed by 110-114 (NRMGF). FMN contacts are provided by Asn138 and Asn171. Residue Asn171 participates in substrate binding. Ser174 (nucleophile) is an active-site residue. Substrate is bound at residue Asn176. The FMN site is built by Lys216 and Thr244. Residue 245–246 (NT) participates in substrate binding. FMN is bound by residues Gly267, Gly296, and 317–318 (YS).

It belongs to the dihydroorotate dehydrogenase family. Type 2 subfamily. Monomer. Requires FMN as cofactor.

It localises to the cell membrane. It carries out the reaction (S)-dihydroorotate + a quinone = orotate + a quinol. Its pathway is pyrimidine metabolism; UMP biosynthesis via de novo pathway; orotate from (S)-dihydroorotate (quinone route): step 1/1. Its function is as follows. Catalyzes the conversion of dihydroorotate to orotate with quinone as electron acceptor. The polypeptide is Dihydroorotate dehydrogenase (quinone) (Pseudomonas fluorescens (strain Pf0-1)).